A 207-amino-acid chain; its full sequence is Acyl-homoserine-lactone synthase (207 aa).

This sequence belongs to the autoinducer synthase family.

It catalyses the reaction a fatty acyl-[ACP] + S-adenosyl-L-methionine = an N-acyl-L-homoserine lactone + S-methyl-5'-thioadenosine + holo-[ACP] + H(+). Its function is as follows. Required for the synthesis of N-butanoyl-L-homoserine lactone (BHL), an autoinducer molecule which binds to AhyR. The chain is Acyl-homoserine-lactone synthase (ahyI) from Aeromonas hydrophila.